We begin with the raw amino-acid sequence, 946 residues long: Inhibin beta chain (946 aa).

Disordered stretches follow at residues 115–142 (VADRSQASSRTVHVSVPTTPNETPSSTS) and 174–194 (KSRNRKRQRRRRRRRNHRRRR). The span at 128–142 (VSVPTTPNETPSSTS) shows a compositional bias: low complexity. 4 N-linked (GlcNAc...) asparagine glycosylation sites follow: asparagine 208, asparagine 217, asparagine 271, and asparagine 389. The segment at 436 to 462 (SPGSHLFNGRGGRTDQRSERDPSHHKY) is disordered. The span at 447-459 (GRTDQRSERDPSH) shows a compositional bias: basic and acidic residues. N-linked (GlcNAc...) asparagine glycans are attached at residues asparagine 471, asparagine 484, asparagine 542, asparagine 561, asparagine 566, asparagine 732, and asparagine 804. 4 cysteine pairs are disulfide-bonded: cysteine 837–cysteine 846, cysteine 845–cysteine 912, cysteine 874–cysteine 943, and cysteine 878–cysteine 945.

This sequence belongs to the TGF-beta family. Homodimer or heterodimer; disulfide-linked. Post-translationally, cleaved in vitro by metalloproteases tok and tld to produce a 30 kDa product. As to expression, widely expressed in larval brains.

It localises to the secreted. Controls several aspects of neuronal morphogenesis; essential for optic lobe development, EcR-B1 expression in larval brains, mushroom body remodeling, dorsal neuron morphogenesis and motoneuron axon guidance. Ligands Actbeta and daw act redundantly through the Activin receptor Babo and its transcriptional mediator Smad2 (Smox), to regulate neuroblast numbers and proliferation rates in the developing larval brain. This is Inhibin beta chain (Actbeta) from Drosophila melanogaster (Fruit fly).